A 288-amino-acid polypeptide reads, in one-letter code: NAD(P)H-hydrate epimerase (288 aa).

Residues 1-59 (MSGLRALLGLGLPVAGSRLPRVRVQAGACRARPTWWGPQRLISGGRGDVEGMASSAVKY) constitute a mitochondrion transit peptide. Residues 65-275 (AQAVDQELFN…ALEKKYQLNL (211 aa)) enclose the YjeF N-terminal domain. (6S)-NADPHX is bound at residue 119–123 (NNGGD). Residue asparagine 120 coordinates K(+). Lysine 144 is subject to N6-succinyllysine. Residue aspartate 185 coordinates K(+). (6S)-NADPHX is bound by residues 189 to 195 (GFSFKGE) and aspartate 218. Serine 221 contributes to the K(+) binding site.

The protein belongs to the NnrE/AIBP family. Homodimer. Interacts with APOA1 and APOA2. K(+) serves as cofactor. Post-translationally, undergoes physiological phosphorylation during sperm capacitation, downstream to PKA activation.

The protein resides in the mitochondrion. It is found in the secreted. It carries out the reaction (6R)-NADHX = (6S)-NADHX. The catalysed reaction is (6R)-NADPHX = (6S)-NADPHX. Catalyzes the epimerization of the S- and R-forms of NAD(P)HX, a damaged form of NAD(P)H that is a result of enzymatic or heat-dependent hydration. This is a prerequisite for the S-specific NAD(P)H-hydrate dehydratase to allow the repair of both epimers of NAD(P)HX. Accelerates cholesterol efflux from endothelial cells to high-density lipoprotein (HDL) and thereby regulates angiogenesis. The chain is NAD(P)H-hydrate epimerase from Sus scrofa (Pig).